A 1418-amino-acid chain; its full sequence is Structural maintenance of chromosomes protein 4 (1418 aa).

The interval 1-122 (MSDSPLSKRQ…SPGRSPTRRL (122 aa)) is disordered. Serine 2 carries the N-acetylserine modification. Composition is skewed to polar residues over residues 34–43 (ENRVNLSENT) and 68–97 (SGEN…PKTS). Threonine 43 carries the post-translational modification Phosphothreonine. Positions 107–117 (SQSPPRSPGRS) are enriched in low complexity. At serine 113 the chain carries Phosphoserine. Residue 185–192 (GPNGSGKS) coordinates ATP. Residues 345–673 (GQIENLNEVC…SKAQNKSKVL (329 aa)) adopt a coiled-coil conformation. The 114-residue stretch at 686–799 (NGFHGRLGDL…QNLKQANNVA (114 aa)) folds into the SMC hinge domain. 2 coiled-coil regions span residues 849 to 1172 (EEVD…CDNY) and 1224 to 1263 (VLEE…KKKR).

The protein belongs to the SMC family. SMC4 subfamily. Forms a heterodimer with SMC2. Component of the condensin complex, which contains the SMC2 and SMC4 heterodimer, and three non SMC subunits that probably regulate the complex: BRN1, YCS4 and YCG1/YCS5.

Its subcellular location is the nucleus. It localises to the cytoplasm. The protein localises to the chromosome. Functionally, central component of the condensin complex, a complex required for conversion of interphase chromatin into mitotic-like condense chromosomes. The condensin complex probably introduces positive supercoils into relaxed DNA in the presence of type I topoisomerases and converts nicked DNA into positive knotted forms in the presence of type II topoisomerases. This Saccharomyces cerevisiae (strain ATCC 204508 / S288c) (Baker's yeast) protein is Structural maintenance of chromosomes protein 4 (SMC4).